The following is a 212-amino-acid chain: Adenylate kinase (212 aa).

10–15 provides a ligand contact to ATP; it reads GAGKGT. An NMP region spans residues 30–59; sequence STGDMFRAAMANQTEMGRLAKSYIDKGELV. Residues threonine 31, arginine 36, 57-59, 86-89, and glutamine 93 contribute to the AMP site; these read ELV and GYPR. Positions 127 to 159 are LID; the sequence is GRIINRKTGETFHKVFNPPVDYKEEDYYQREDD. Residues arginine 128 and 137–138 each bind ATP; that span reads TF. Residues arginine 156 and arginine 167 each coordinate AMP. ATP is bound at residue glutamine 195.

Belongs to the adenylate kinase family. In terms of assembly, monomer.

Its subcellular location is the cytoplasm. It catalyses the reaction AMP + ATP = 2 ADP. Its pathway is purine metabolism; AMP biosynthesis via salvage pathway; AMP from ADP: step 1/1. Functionally, catalyzes the reversible transfer of the terminal phosphate group between ATP and AMP. Plays an important role in cellular energy homeostasis and in adenine nucleotide metabolism. In Streptococcus pyogenes serotype M5 (strain Manfredo), this protein is Adenylate kinase.